Here is a 409-residue protein sequence, read N- to C-terminus: Homoserine O-succinyltransferase (409 aa).

The 338-residue stretch at 43-380 folds into the AB hydrolase-1 domain; the sequence is NAIVVCHALN…PHGHDAFLLD (338 aa). Ser149 serves as the catalytic Nucleophile. Arg219 contacts substrate. The tract at residues 244–268 is disordered; it reads TLPAARGSLPPEGTDPTRGGPASDR. Catalysis depends on residues Asp341 and His374. Residue Asp375 coordinates substrate.

Belongs to the AB hydrolase superfamily. MetX family. In terms of assembly, homodimer.

The protein resides in the cytoplasm. The catalysed reaction is L-homoserine + succinyl-CoA = O-succinyl-L-homoserine + CoA. Its pathway is amino-acid biosynthesis; L-methionine biosynthesis via de novo pathway; O-succinyl-L-homoserine from L-homoserine: step 1/1. Its function is as follows. Transfers a succinyl group from succinyl-CoA to L-homoserine, forming succinyl-L-homoserine. The protein is Homoserine O-succinyltransferase of Comamonas testosteroni (strain DSM 14576 / KF-1) (Pseudomonas testosteroni).